The sequence spans 406 residues: MRRTVITGFGIISSIGNNKEEVLASLKAGKSGIEVVPEFVEMNMRSHVAGTIKLNPSEHIDRKVFRFMGDAAAYAYLSMREAIEDAGLTEDQVSNDRTGLVIGAGTGSAHNQLVACDAVRGPRGVKAIGPYAVTKTMASSVSACLATPYKIRGVNYSMSSACATSAHCIGHAVELIQLGKQDVVFAGGAEELSWECATEFDAMGAVSTKYNETPEKASRAYDANRDGFVIAGGGAVVVVEELEHALARGAKIYAEIVGYGATSDGYDMVAPSGEGAERCMKQAMATVDTPIDYINVHGTSTPVGDVKELGAIKNVFGDKIPAISSTKSMTGHSLGAAGAHEAIYTLLMLDNDFIAPSINIETLDEAAEGCNIVTETKENAGLQTVMSNSFGFGGTNATLIFKRYNG.

A Ketosynthase family 3 (KS3) domain is found at 1 to 403 (MRRTVITGFG…GTNATLIFKR (403 aa)). Catalysis depends on for beta-ketoacyl synthase activity residues C162, H297, and H332.

Belongs to the thiolase-like superfamily. Beta-ketoacyl-ACP synthases family. As to quaternary structure, homodimer.

The protein localises to the cytoplasm. The catalysed reaction is a fatty acyl-[ACP] + malonyl-[ACP] + H(+) = a 3-oxoacyl-[ACP] + holo-[ACP] + CO2. The enzyme catalyses (3Z)-decenoyl-[ACP] + malonyl-[ACP] + H(+) = 3-oxo-(5Z)-dodecenoyl-[ACP] + holo-[ACP] + CO2. It functions in the pathway lipid metabolism; fatty acid biosynthesis. Its function is as follows. Involved in the type II fatty acid elongation cycle. Catalyzes the elongation of a wide range of acyl-ACP by the addition of two carbons from malonyl-ACP to an acyl acceptor. Can also use unsaturated fatty acids. Catalyzes a key reaction in unsaturated fatty acid (UFA) synthesis, the elongation of the cis-3-decenoyl-ACP produced by FabA. This Haemophilus influenzae (strain ATCC 51907 / DSM 11121 / KW20 / Rd) protein is 3-oxoacyl-[acyl-carrier-protein] synthase 1 (fabB).